Consider the following 218-residue polypeptide: Epoxyqueuosine reductase QueH (218 aa).

[4Fe-4S] cluster is bound by residues Cys22, Cys23, Cys101, and Cys104. An intrachain disulfide couples Cys184 to Cys186.

This sequence belongs to the QueH family.

It catalyses the reaction epoxyqueuosine(34) in tRNA + AH2 = queuosine(34) in tRNA + A + H2O. It participates in tRNA modification; tRNA-queuosine biosynthesis. Its function is as follows. Catalyzes the conversion of epoxyqueuosine (oQ) to queuosine (Q), which is a hypermodified base found in the wobble positions of tRNA(Asp), tRNA(Asn), tRNA(His) and tRNA(Tyr). The sequence is that of Epoxyqueuosine reductase QueH from Acinetobacter baylyi (strain ATCC 33305 / BD413 / ADP1).